A 951-amino-acid chain; its full sequence is Translation initiation factor IF-2 (951 aa).

Disordered regions lie at residues 58–255 and 305–329; these read AERK…AVVI and DVSR…KSLS. A compositionally biased stretch (low complexity) spans 101–170; sequence AEPQYAEPQQ…PQAQPAQPAA (70 aa). The span at 171-216 shows a compositional bias: pro residues; it reads PVAPPAPSAQPSAPQPPAAQPRPPQPPMPSRPPPAGYRPAPPPGAR. The segment covering 217 to 234 has biased composition (low complexity); that stretch reads PPMSAAPGAPAQPGAAGQ. The tr-type G domain maps to 450–619; that stretch reads IRPPVVTVMG…ALQSEVLELK (170 aa). Residues 459 to 466 are G1; it reads GHVDHGKT. GTP is bound at residue 459 to 466; the sequence is GHVDHGKT. Residues 484 to 488 form a G2 region; it reads GITQH. Residues 505 to 508 are G3; sequence DTPG. Residues 505-509 and 559-562 each bind GTP; these read DTPGH and NKVD. Residues 559-562 form a G4 region; sequence NKVD. Residues 595 to 597 form a G5 region; sequence SAR.

The protein belongs to the TRAFAC class translation factor GTPase superfamily. Classic translation factor GTPase family. IF-2 subfamily.

The protein localises to the cytoplasm. Its function is as follows. One of the essential components for the initiation of protein synthesis. Protects formylmethionyl-tRNA from spontaneous hydrolysis and promotes its binding to the 30S ribosomal subunits. Also involved in the hydrolysis of GTP during the formation of the 70S ribosomal complex. In Anaeromyxobacter dehalogenans (strain 2CP-1 / ATCC BAA-258), this protein is Translation initiation factor IF-2.